The chain runs to 330 residues: RNA/RNP complex-1-interacting phosphatase (330 aa).

Residues 1–12 (MSQWHHPRSGWG) show a composition bias toward basic residues. Residues 1–32 (MSQWHHPRSGWGRRRDFSGRSSAKKKGGNHIP) are disordered. The Tyrosine-protein phosphatase domain occupies 61 to 208 (FEKKLAPEEC…LQNGPIRKNW (148 aa)). C152 functions as the Phosphocysteine intermediate in the catalytic mechanism. Residue 153–158 (THGLNR) participates in substrate binding. R158 (proton donor/acceptor) is an active-site residue.

The protein belongs to the protein-tyrosine phosphatase family. Non-receptor class dual specificity subfamily. As to quaternary structure, monomer. May interact with SFRS7 and SFRS9/SRP30C.

The protein localises to the nucleus. The protein resides in the nucleus speckle. Functionally, possesses RNA 5'-triphosphatase and diphosphatase activities, but displays a poor protein-tyrosine phosphatase activity. In addition, has phosphatase activity with ATP, ADP and O-methylfluorescein phosphate (in vitro). Binds to RNA. May participate in nuclear mRNA metabolism. This chain is RNA/RNP complex-1-interacting phosphatase, found in Homo sapiens (Human).